Reading from the N-terminus, the 392-residue chain is Formate-dependent phosphoribosylglycinamide formyltransferase (392 aa).

Residues Glu-22 to Leu-23 and Glu-82 each bind N(1)-(5-phospho-beta-D-ribosyl)glycinamide. Residues Arg-114, Lys-155, Ser-160–Gln-165, Glu-195–Val-198, and Glu-203 contribute to the ATP site. Positions Arg-119 to Leu-308 constitute an ATP-grasp domain. The Mg(2+) site is built by Glu-267 and Glu-279. Residues Asp-286, Lys-355, and Arg-362 to Arg-363 contribute to the N(1)-(5-phospho-beta-D-ribosyl)glycinamide site.

It belongs to the PurK/PurT family. In terms of assembly, homodimer.

The enzyme catalyses N(1)-(5-phospho-beta-D-ribosyl)glycinamide + formate + ATP = N(2)-formyl-N(1)-(5-phospho-beta-D-ribosyl)glycinamide + ADP + phosphate + H(+). The protein operates within purine metabolism; IMP biosynthesis via de novo pathway; N(2)-formyl-N(1)-(5-phospho-D-ribosyl)glycinamide from N(1)-(5-phospho-D-ribosyl)glycinamide (formate route): step 1/1. Its function is as follows. Involved in the de novo purine biosynthesis. Catalyzes the transfer of formate to 5-phospho-ribosyl-glycinamide (GAR), producing 5-phospho-ribosyl-N-formylglycinamide (FGAR). Formate is provided by PurU via hydrolysis of 10-formyl-tetrahydrofolate. The chain is Formate-dependent phosphoribosylglycinamide formyltransferase from Salmonella arizonae (strain ATCC BAA-731 / CDC346-86 / RSK2980).